The primary structure comprises 336 residues: Aldehyde reductase AdhA (336 aa).

Zn(2+) contacts are provided by cysteine 36, cysteine 39, histidine 61, cysteine 92, cysteine 95, cysteine 98, cysteine 106, and cysteine 148.

Belongs to the zinc-containing alcohol dehydrogenase family. In terms of assembly, homotetramer. Zn(2+) serves as cofactor.

The protein resides in the cytoplasm. The catalysed reaction is a primary alcohol + NADP(+) = an aldehyde + NADPH + H(+). Its function is as follows. Active on a wide variety of primary alcohols and their corresponding aldehydes, but not against ketones nor secondary alcohols. Active on aliphatic compounds up to 5 carbons in length and aromatic alcohols, less effective on branched-chain primary alcohols. Prefers NADPH to NADH. Its catalytic efficiency is greatest for aldehydes, suggesting the reduction of aromatic and medium-chain aliphatic aldehydes is its in vivo activity. Plays a role in tolerance to internally produced ethanol. This chain is Aldehyde reductase AdhA, found in Synechocystis sp. (strain ATCC 27184 / PCC 6803 / Kazusa).